A 558-amino-acid chain; its full sequence is MAHSEEQAAVPCAFIRQNSGNSISLDFEPDTEYQFVEQLEERYKCAFCHSVLHNPHQTGCGHRFCQQCIRSLRELNSVPICPVDKEVIKPQEVFKDNCCKREVLNLHVYCKNAPGCNARIILGRFQDHLQHCSFQAVPCPNESCREAMLRKDVKEHLSAYCRFREEKCLYCKRDIVVTNLQDHEENSCPAYPVSCPNRCVQTIPRARVNEHLTVCPEAEQDCPFKHYGCTVKGKRGNLLEHERAALQDHMLLVLEKNYQLEQRISDLYQSLEQKESKIQQLAETVKKFEKELKQFTQMFGRNGTFLSNVQALTSHTDKSAWLEAQVRQLLQIVNQQPSRLDLRSLVDAVDSVKQRITQLEASDQRLVLLEGETSKHDAHINIHKAQLNKNEERFKQLEGACYSGKLIWKVTDYRVKKREAVEGHTVSVFSQPFYTSRCGYRLCARAYLNGDGSGKGTHLSLYFVVMRGEFDSLLQWPFRQRVTLMLLDQSGKKNHIVETFKADPNSSSFKRPDGEMNIASGCPRFVSHSTLENSKNTYIKDDTLFLKVAVDLTDLEDL.

The segment at 45 to 85 (CAFCHSVLHNPHQTGCGHRFCQQCIRSLRELNSVPICPVDK) adopts an RING-type zinc-finger fold. 2 consecutive TRAF-type zinc fingers follow at residues 127–181 (DHLQ…TNLQ) and 182–239 (DHEE…GNLL). A coiled-coil region spans residues 252–302 (LVLEKNYQLEQRISDLYQSLEQKESKIQQLAETVKKFEKELKQFTQMFGRN). Residue K318 forms a Glycyl lysine isopeptide (Lys-Gly) (interchain with G-Cter in ubiquitin) linkage. Positions 340-400 (LDLRSLVDAV…EERFKQLEGA (61 aa)) form a coiled coil. Residues 345–558 (LVDAVDSVKQ…AVDLTDLEDL (214 aa)) are interaction with EIF2AK2/PKR. The region spanning 403-550 (SGKLIWKVTD…DDTLFLKVAV (148 aa)) is the MATH domain.

Belongs to the TNF receptor-associated factor family. A subfamily. As to quaternary structure, homotrimer. Heterotrimer with TRAF3. Associates with TNFRSF5/CD40 through interaction with TRAF3. Associates with LTBR/TNFRSF3, TNFRSF4, TNFRSF8/CD30, TNFRSF11A/RANK, TNFRSF13B/TACI, TNFRSF14, TNFRSF17, TNFRSF19/TROY, RIPK2, MAP3K14, MAP3K5, and TRAF and TNF receptor associated protein TDP2. Interacts (via C-terminus) with EIF2AK2/PKR (via the kinase catalytic domain). In terms of processing, ubiquitinated at Lys-318 by the SCF(FBXL2) complex, leading to its degradation by the proteasome.

It localises to the cytoplasm. Its subcellular location is the cytosol. In terms of biological role, adapter protein and signal transducer that links members of the tumor necrosis factor receptor family to different signaling pathways by association with the receptor cytoplasmic domain and kinases. Mediates activation of NF-kappa-B and probably JNK. Seems to be involved in apoptosis. Plays a role in mediating activation of NF-kappa-B by EIF2AK2/PKR. The polypeptide is TNF receptor-associated factor 5 (Traf5) (Mus musculus (Mouse)).